A 118-amino-acid chain; its full sequence is Telomere bouquet protein 2 (118 aa).

Interacts with bqt1. The bqt1-bqt2-sad1 complex binds rap1.

The protein localises to the cytoplasm. Its subcellular location is the nucleus. The protein resides in the cytoskeleton. It is found in the microtubule organizing center. It localises to the spindle pole body. The protein localises to the chromosome. Its subcellular location is the telomere. Its function is as follows. Involved in chromosome segregation. During meiotic prophase, connects telomeres to the spindle pole body by forming a bridge between the telomere protein rap1 and the spindle pole body protein sad1. The polypeptide is Telomere bouquet protein 2 (bqt2) (Schizosaccharomyces pombe (strain 972 / ATCC 24843) (Fission yeast)).